The sequence spans 214 residues: Putative 3-methyladenine DNA glycosylase (214 aa).

This sequence belongs to the DNA glycosylase MPG family.

This chain is Putative 3-methyladenine DNA glycosylase, found in Mycobacterium leprae (strain Br4923).